We begin with the raw amino-acid sequence, 234 residues long: Bradykinin-releasing enzyme KR-E-1 (234 aa).

Positions V1–A225 constitute a Peptidase S1 domain. 6 cysteine pairs are disulfide-bonded: C7–C139, C26–C42, C74–C232, C118–C186, C150–C165, and C176–C201. Residue N20 is glycosylated (N-linked (GlcNAc...) asparagine). Active-site charge relay system residues include H41 and D86. The active-site Charge relay system is the S180.

Belongs to the peptidase S1 family. Snake venom subfamily. As to quaternary structure, monomer. Expressed by the venom gland.

Its subcellular location is the secreted. Bradykinin-releasing enzyme. Releases bradykinin from bovine HMW kininogen. Has anticoagulant activity. Increases permeability of capillaries by intradermal injection into rabbits. The sequence is that of Bradykinin-releasing enzyme KR-E-1 from Gloydius ussuriensis (Ussuri mamushi).